Reading from the N-terminus, the 517-residue chain is Probable protein phosphatase 2C 20 (517 aa).

Residues 1–59 (MWVMQGERRRARAPWGPPDTGGALLERWISRERRSDSRDASGSAKQRSAMGNSLPVESK) form a disordered region. The span at 28-39 (WISRERRSDSRD) shows a compositional bias: basic and acidic residues. Residues 70–373 (KYVVSSMQGW…DNTTVILVLF (304 aa)) enclose the PPM-type phosphatase domain. Residues Asp-105, Gly-106, Glu-323, and Asp-364 each coordinate Mn(2+). A disordered region spans residues 380–517 (AVPPVDTDTD…PPHDDTYHRW (138 aa)). A compositionally biased stretch (polar residues) spans 402–414 (GSNNATASDNNDP). The span at 438 to 455 (DATATAVGSSSTTAVAAD) shows a compositional bias: low complexity. The segment covering 499 to 517 (LPRSNPDKSPPHDDTYHRW) has biased composition (basic and acidic residues).

Belongs to the PP2C family. Mg(2+) is required as a cofactor. Requires Mn(2+) as cofactor.

The enzyme catalyses O-phospho-L-seryl-[protein] + H2O = L-seryl-[protein] + phosphate. The catalysed reaction is O-phospho-L-threonyl-[protein] + H2O = L-threonyl-[protein] + phosphate. This is Probable protein phosphatase 2C 20 from Oryza sativa subsp. japonica (Rice).